A 373-amino-acid chain; its full sequence is Peptide chain release factor 1-like, mitochondrial (373 aa).

The transit peptide at Met1–Ser25 directs the protein to the mitochondrion. Residues Gln56–Leu110 are a coiled coil. Residues Pro229–Leu293 form a GGQ domain region. Residues Gly243 to Gln245 carry the GGQ motif. Gln245 carries the post-translational modification N5-methylglutamine.

It belongs to the prokaryotic/mitochondrial release factor family. Methylation of glutamine in the GGQ triplet by HEMK1 is conserved from bacteria to mammals.

It is found in the mitochondrion. Mitochondrial peptide chain release factor that directs the termination of translation in response to the peptide chain termination codons UAA and UAG. In Mus musculus (Mouse), this protein is Peptide chain release factor 1-like, mitochondrial (Mtrf1l).